We begin with the raw amino-acid sequence, 120 residues long: NAD(P)H-quinone oxidoreductase subunit 3, chloroplastic (120 aa).

Transmembrane regions (helical) follow at residues 7 to 27 (YDYF…IFSL), 64 to 84 (MFAL…PWAM), and 89 to 109 (FGIS…IGLV).

It belongs to the complex I subunit 3 family. As to quaternary structure, NDH is composed of at least 16 different subunits, 5 of which are encoded in the nucleus.

The protein resides in the plastid. It is found in the chloroplast thylakoid membrane. The catalysed reaction is a plastoquinone + NADH + (n+1) H(+)(in) = a plastoquinol + NAD(+) + n H(+)(out). The enzyme catalyses a plastoquinone + NADPH + (n+1) H(+)(in) = a plastoquinol + NADP(+) + n H(+)(out). Functionally, NDH shuttles electrons from NAD(P)H:plastoquinone, via FMN and iron-sulfur (Fe-S) centers, to quinones in the photosynthetic chain and possibly in a chloroplast respiratory chain. The immediate electron acceptor for the enzyme in this species is believed to be plastoquinone. Couples the redox reaction to proton translocation, and thus conserves the redox energy in a proton gradient. The polypeptide is NAD(P)H-quinone oxidoreductase subunit 3, chloroplastic (Marchantia polymorpha (Common liverwort)).